The following is a 287-amino-acid chain: Inhibitory synaptic factor 1 (287 aa).

The segment at 1–22 is disordered; the sequence is MSQSRAPAREPSETPSQREQIR. Residues 25–58 adopt a coiled-coil conformation; it reads MKMVIQQLEGILKELKDVAHELREVVGQIDKLTS. Disordered regions lie at residues 113-174 and 189-287; these read RRSA…GTRE and CDDD…NKDL. Residues 153-167 show a composition bias toward low complexity; that stretch reads EEASSSTHSQSQKTS. A compositionally biased stretch (acidic residues) spans 189–209; it reads CDDDEDEDEDEDGRDEEEDKL. A compositionally biased stretch (polar residues) spans 259–274; that stretch reads RNSSTQTVSDKSTQTL.

This sequence belongs to the INSYN1 family.

The protein resides in the postsynaptic density. Its function is as follows. May be a component of the protein machinery at the inhibitory synapses, probably acting as a scaffold. The chain is Inhibitory synaptic factor 1 from Danio rerio (Zebrafish).